The primary structure comprises 154 residues: Myoglobin (154 aa).

One can recognise a Globin domain in the interval 2 to 148 (GLSDGEWQLV…FRNDIAAKYK (147 aa)). Ser-4 carries the post-translational modification Phosphoserine. His-65 is a nitrite binding site. His-65 is an O2 binding site. Thr-68 and Thr-75 each carry phosphothreonine. His-94 contributes to the heme b binding site. Ser-121 is subject to Phosphoserine.

This sequence belongs to the globin family. Monomeric.

The protein localises to the cytoplasm. The protein resides in the sarcoplasm. The enzyme catalyses Fe(III)-heme b-[protein] + nitric oxide + H2O = Fe(II)-heme b-[protein] + nitrite + 2 H(+). It catalyses the reaction H2O2 + AH2 = A + 2 H2O. In terms of biological role, monomeric heme protein which primary function is to store oxygen and facilitate its diffusion within muscle tissues. Reversibly binds oxygen through a pentacoordinated heme iron and enables its timely and efficient release as needed during periods of heightened demand. Depending on the oxidative conditions of tissues and cells, and in addition to its ability to bind oxygen, it also has a nitrite reductase activity whereby it regulates the production of bioactive nitric oxide. Under stress conditions, like hypoxia and anoxia, it also protects cells against reactive oxygen species thanks to its pseudoperoxidase activity. In Mus musculus (Mouse), this protein is Myoglobin.